Consider the following 431-residue polypeptide: Keratin, type I cytoskeletal 18 (431 aa).

The interval 2 to 83 (SLRTSYSVRS…SGSTGEIMGN (82 aa)) is head. At serine 12 the chain carries Phosphoserine. Threonine 13 is subject to Phosphothreonine. Phosphoserine is present on residues serine 22 and serine 36. Residues 84-119 (EKMAMQNLNDRLASYLEKVRILEQANSKLELKIREA) form a coil 1A region. Residues 84 to 395 (EKMAMQNLND…RLLDGGDFKL (312 aa)) enclose the IF rod domain. The tract at residues 120-136 (LEKRGPDVHDYSRFQPI) is linker 1. The tract at residues 137–228 (VDELRKKIFD…KNHDNEVMEL (92 aa)) is coil 1B. The tract at residues 229 to 252 (RNQISQSGVQVDVDAPKGQDLSQI) is linker 12. The coil 2 stretch occupies residues 253–390 (MEEIRAKYEK…IATYRRLLDG (138 aa)). The interval 391 to 431 (GDFKLQDALEEQKKVKVMTVTQTLVDGKVVSSSTETKERKL) is tail.

The protein belongs to the intermediate filament family. Heterotetramer of two type I and two type II keratins. Keratin-18 associates with keratin-8. Post-translationally, proteolytically cleaved by caspases during epithelial cell apoptosis. In terms of tissue distribution, expressed in simple epithelia such as intestinal mucosa, bile duct, hepatocytes, renal tubules, endothelia, ocular lens epithelium, and in a variety of mesenchymally-derived cells such as blood vessel endothelia, pillar gill cells, optic nerve glial cells, fibroblasts, interstitial cells, chondrocytes and ovarian theca cells. Also expressed in epidermis, pharyngeal mucosa, mucosa of anterior esophagus, gill mucosa and cornea.

In terms of biological role, when phosphorylated, plays a role in filament reorganization. The protein is Keratin, type I cytoskeletal 18 of Danio rerio (Zebrafish).